The following is a 742-amino-acid chain: Synaptic vesicle glycoprotein 2A (742 aa).

The segment at 1 to 57 is interaction with SYT1; it reads MEEGFRDRAAFIRGAKDIAKEVKKHAAKKVVKGLDRVQDEYSRRSYSRFEEEDDDDD. Residues 1-169 lie on the Cytoplasmic side of the membrane; the sequence is MEEGFRDRAA…SHGRFQWTLY (169 aa). Basic and acidic residues predominate over residues 40-49; that stretch reads EYSRRSYSRF. The tract at residues 40-144 is disordered; that stretch reads EYSRRSYSRF…GRGEAQRRKE (105 aa). 2 positions are modified to phosphoserine: S80 and S81. At T84 the chain carries Phosphothreonine. Gly residues predominate over residues 122–137; it reads VRGGLSDGEGPPGGRG. At S127 the chain carries Phosphoserine. A helical membrane pass occupies residues 170–190; the sequence is FVLGLALMADGVEVFVVGFVL. Over 191 to 205 the chain is Extracellular; that stretch reads PSAEKDMCLSDSNKG. The helical transmembrane segment at 206 to 226 threads the bilayer; it reads MLGLIVYLGMMVGAFLWGGLA. The Cytoplasmic portion of the chain corresponds to 227 to 233; sequence DRLGRRQ. The helical transmembrane segment at 234 to 254 threads the bilayer; that stretch reads CLLISLSVNSVFAFFSSFVQG. At 255–262 the chain is on the extracellular side; that stretch reads YGTFLFCR. A helical transmembrane segment spans residues 263 to 283; it reads LLSGVGIGGSIPIVFSYFSEF. At 284-294 the chain is on the cytoplasmic side; it reads LAQEKRGEHLS. Residues 295–315 traverse the membrane as a helical segment; the sequence is WLCMFWMIGGVYAAAMAWAII. Topologically, residues 316–334 are extracellular; that stretch reads PHYGWSFQMGSAYQFHSWR. Residues 335 to 355 form a helical membrane-spanning segment; sequence VFVLVCAFPSVFAIGALTTQP. Over 356 to 447 the chain is Cytoplasmic; it reads ESPRFFLENG…CFGPEYRRIT (92 aa). S393 carries the post-translational modification Phosphoserine. The helical transmembrane segment at 448–468 threads the bilayer; the sequence is LMMMGVWFTMSFSYYGLTVWF. Residues 469 to 598 are Extracellular-facing; that stretch reads PDMIRHLQAV…GTGEGAYMVY (130 aa). Y480 carries the post-translational modification Phosphotyrosine. Residues N498, N548, and N573 are each glycosylated (N-linked (GlcNAc...) asparagine). The helical transmembrane segment at 599–619 threads the bilayer; that stretch reads FVSFLGTLAVLPGNIVSALLM. The Cytoplasmic segment spans residues 620-626; that stretch reads DKIGRLR. Residues 627–647 form a helical membrane-spanning segment; sequence MLAGSSVMSCVSCFFLSFGNS. At 648-651 the chain is on the extracellular side; it reads ESAM. The helical transmembrane segment at 652-672 threads the bilayer; it reads IALLCLFGGVSIASWNALDVL. Topologically, residues 673–685 are cytoplasmic; the sequence is TVELYPSDKRTTA. Residues 686-708 form a helical membrane-spanning segment; that stretch reads FGFLNALCKLAAVLGISIFTSFV. Residues 709 to 712 are Extracellular-facing; sequence GITK. A helical membrane pass occupies residues 713-731; sequence AAPILFASAALALGSSLAL. Over 732–742 the chain is Cytoplasmic; the sequence is KLPETRGQVLQ.

Belongs to the major facilitator superfamily. As to quaternary structure, interacts with SYT1/synaptotagmin-1 in a calcium-dependent manner. Binds the adapter protein complex AP-2. Phosphorylation by CK1 of the N-terminal cytoplasmic domain regulates interaction with SYT1. In terms of processing, N-glycosylated.

The protein resides in the presynapse. The protein localises to the cytoplasmic vesicle. Its subcellular location is the secretory vesicle. It localises to the synaptic vesicle membrane. Plays a role in the control of regulated secretion in neural and endocrine cells, enhancing selectively low-frequency neurotransmission. Positively regulates vesicle fusion by maintaining the readily releasable pool of secretory vesicles. The protein is Synaptic vesicle glycoprotein 2A (SV2A) of Pongo abelii (Sumatran orangutan).